We begin with the raw amino-acid sequence, 284 residues long: Pantothenate synthetase (284 aa).

An ATP-binding site is contributed by 30–37; that stretch reads MGYLHEGH. H37 (proton donor) is an active-site residue. Position 61 (Q61) interacts with (R)-pantoate. Q61 contributes to the beta-alanine binding site. Residue 147-150 participates in ATP binding; sequence GQKD. Q153 contacts (R)-pantoate. ATP contacts are provided by residues V176 and 184 to 187; that span reads KSSR.

This sequence belongs to the pantothenate synthetase family. In terms of assembly, homodimer.

The protein resides in the cytoplasm. The catalysed reaction is (R)-pantoate + beta-alanine + ATP = (R)-pantothenate + AMP + diphosphate + H(+). Its pathway is cofactor biosynthesis; (R)-pantothenate biosynthesis; (R)-pantothenate from (R)-pantoate and beta-alanine: step 1/1. Catalyzes the condensation of pantoate with beta-alanine in an ATP-dependent reaction via a pantoyl-adenylate intermediate. The polypeptide is Pantothenate synthetase (Lysinibacillus sphaericus (strain C3-41)).